Reading from the N-terminus, the 270-residue chain is 5'-AMP-activated protein kinase subunit beta-1 (270 aa).

The segment at 1–46 (MGNTSSERAALERHGGHKTPRRDSSGGTKDGDRPKILMDSPEDADL) is disordered. The N-myristoyl glycine moiety is linked to residue Gly-2. Phosphothreonine is present on Thr-4. Phosphoserine occurs at positions 5 and 6. The residue at position 19 (Thr-19) is a Phosphothreonine. The span at 21 to 36 (RRDSSGGTKDGDRPKI) shows a compositional bias: basic and acidic residues. Phosphoserine; by autocatalysis occurs at positions 24 and 25. Phosphoserine is present on residues Ser-40, Ser-96, and Ser-101. Residues 68–163 (EVNDKAPAQA…QVKKTDFEVF (96 aa)) form a glycogen-binding domain region. Residue Ser-108 is modified to Phosphoserine; by autocatalysis. Phosphothreonine is present on Thr-148. Residue Ser-182 is modified to Phosphoserine.

This sequence belongs to the 5'-AMP-activated protein kinase beta subunit family. In terms of assembly, AMPK is a heterotrimer of an alpha catalytic subunit (PRKAA1 or PRKAA2), a beta (PRKAB1 or PRKAB2) and a gamma non-catalytic subunits (PRKAG1, PRKAG2 or PRKAG3). Interacts with FNIP1 and FNIP2. Post-translationally, phosphorylated when associated with the catalytic subunit (PRKAA1 or PRKAA2). Phosphorylated by ULK1; leading to negatively regulate AMPK activity and suggesting the existence of a regulatory feedback loop between ULK1 and AMPK.

Functionally, non-catalytic subunit of AMP-activated protein kinase (AMPK), an energy sensor protein kinase that plays a key role in regulating cellular energy metabolism. In response to reduction of intracellular ATP levels, AMPK activates energy-producing pathways and inhibits energy-consuming processes: inhibits protein, carbohydrate and lipid biosynthesis, as well as cell growth and proliferation. AMPK acts via direct phosphorylation of metabolic enzymes, and by longer-term effects via phosphorylation of transcription regulators. Also acts as a regulator of cellular polarity by remodeling the actin cytoskeleton; probably by indirectly activating myosin. Beta non-catalytic subunit acts as a scaffold on which the AMPK complex assembles, via its C-terminus that bridges alpha (PRKAA1 or PRKAA2) and gamma subunits (PRKAG1, PRKAG2 or PRKAG3). In Pongo abelii (Sumatran orangutan), this protein is 5'-AMP-activated protein kinase subunit beta-1 (PRKAB1).